The primary structure comprises 353 residues: D-alanine--D-alanine ligase (353 aa).

Residues 141–349 (KAAFAAAGLP…LEELVSQLVI (209 aa)) enclose the ATP-grasp domain. 176-231 (EAKLKYPCFVKPANLGSSVGISKAQNRNELLIGLDKAASLDRRIVVEQGVSARELE) is an ATP binding site. Mg(2+)-binding residues include Asp302, Glu316, and Asn318.

Belongs to the D-alanine--D-alanine ligase family. Mg(2+) is required as a cofactor. Mn(2+) serves as cofactor.

It localises to the cytoplasm. It catalyses the reaction 2 D-alanine + ATP = D-alanyl-D-alanine + ADP + phosphate + H(+). It participates in cell wall biogenesis; peptidoglycan biosynthesis. Functionally, cell wall formation. This is D-alanine--D-alanine ligase from Prochlorococcus marinus (strain MIT 9303).